The primary structure comprises 141 residues: ATP synthase epsilon chain (141 aa).

It belongs to the ATPase epsilon chain family. F-type ATPases have 2 components, CF(1) - the catalytic core - and CF(0) - the membrane proton channel. CF(1) has five subunits: alpha(3), beta(3), gamma(1), delta(1), epsilon(1). CF(0) has three main subunits: a, b and c.

It is found in the cell membrane. Functionally, produces ATP from ADP in the presence of a proton gradient across the membrane. The sequence is that of ATP synthase epsilon chain from Mycoplasma mobile (strain ATCC 43663 / 163K / NCTC 11711) (Mesomycoplasma mobile).